The primary structure comprises 138 residues: Large ribosomal subunit protein uL16 (138 aa).

The tract at residues 1–22 (MQQPARTKYRKQQKGRNKGIAT) is disordered. Basic residues predominate over residues 7 to 17 (TKYRKQQKGRN).

Belongs to the universal ribosomal protein uL16 family. As to quaternary structure, part of the 50S ribosomal subunit.

Binds 23S rRNA and is also seen to make contacts with the A and possibly P site tRNAs. The chain is Large ribosomal subunit protein uL16 from Nitrosospira multiformis (strain ATCC 25196 / NCIMB 11849 / C 71).